We begin with the raw amino-acid sequence, 492 residues long: Catalase isozyme 1 (492 aa).

Catalysis depends on residues H65 and N138. Y348 contacts heme.

Belongs to the catalase family. In terms of assembly, homotetramer. Requires heme as cofactor.

The protein resides in the peroxisome. Its subcellular location is the glyoxysome. It catalyses the reaction 2 H2O2 = O2 + 2 H2O. Functionally, occurs in almost all aerobically respiring organisms and serves to protect cells from the toxic effects of hydrogen peroxide. This Solanum tuberosum (Potato) protein is Catalase isozyme 1 (CAT1).